A 149-amino-acid chain; its full sequence is Large ribosomal subunit protein bL9 (149 aa).

Belongs to the bacterial ribosomal protein bL9 family.

In terms of biological role, binds to the 23S rRNA. The protein is Large ribosomal subunit protein bL9 of Cutibacterium acnes (strain DSM 16379 / KPA171202) (Propionibacterium acnes).